Here is a 1771-residue protein sequence, read N- to C-terminus: Gag-Pro-Pol polyprotein (1771 aa).

Gly-2 carries the N-myristoyl glycine; by host lipid modification. Positions Ala-101 to Leu-161 are excised as a propeptide. 2 stretches are compositionally biased toward polar residues: residues Asn-113–Pro-125 and Lys-140–Thr-152. The tract at residues Asn-113–Val-178 is disordered. Positions Pro-202 to Tyr-205 match the PPXY motif motif. A PTAP/PSAP motif motif is present at residues Pro-210 to Pro-213. Residues Met-216–Glu-257 are a coiled coil. The tract at residues Thr-260–Ile-279 is disordered. The short motif at Ala-335–Pro-338 is the PTAP/PSAP motif element. 2 CCHC-type zinc fingers span residues Gly-547 to Glu-564 and Gly-576 to Ser-593. Residues Lys-592 to Leu-626 are disordered. The 77-residue stretch at Phe-780 to Leu-856 folds into the Peptidase A2 domain. The active-site Protease; shared with dimeric partner is the Asp-785. The region spanning Pro-867–Thr-913 is the G-patch domain. The 189-residue stretch at Leu-959–Leu-1147 folds into the Reverse transcriptase domain. Mg(2+)-binding residues include Asp-1024, Asp-1099, Asp-1100, Asp-1370, Glu-1399, Asp-1420, and Asp-1484. The RNase H type-1 domain occupies Leu-1361–Ser-1492. The segment at Thr-1496–Val-1537 adopts an Integrase-type zinc-finger fold. The Zn(2+) site is built by His-1505, His-1509, Cys-1533, and Cys-1536. Residues Arg-1550–Lys-1719 form the Integrase catalytic domain. Mg(2+) contacts are provided by Asp-1561, Asp-1618, and Glu-1654. Positions Ala-1716 to Asn-1765 form a DNA-binding region, integrase-type.

This sequence belongs to the retroviral Pol polyprotein family. In terms of assembly, homodimer. As to quaternary structure, interacts with the G-patch peptide. Interacts with the reverse transcriptase/ribonuclease H. In terms of assembly, homotrimer. Mg(2+) serves as cofactor. Post-translationally, released by autocatalytic processing. The protease can undergo further autoprocessing to yield 2 shorter but enzymatically active forms of 12 kDa and 13 kDa. Myristoylated. Myristoylation of the matrix (MA) domain mediates the transport and binding of Gag polyproteins to the host plasma membrane and is required for the assembly of viral particles. In terms of processing, specific enzymatic cleavages in vivo yield mature proteins.

It localises to the virion. The catalysed reaction is DNA(n) + a 2'-deoxyribonucleoside 5'-triphosphate = DNA(n+1) + diphosphate. It carries out the reaction Endonucleolytic cleavage to 5'-phosphomonoester.. It catalyses the reaction dUTP + H2O = dUMP + diphosphate + H(+). Its function is as follows. Matrix protein. Functionally, nucleocapsid protein p14: Nucleocapsid protein. In terms of biological role, capsid protein. The aspartyl protease mediates proteolytic cleavages of Gag and Gag-Pol polyproteins during or shortly after the release of the virion from the plasma membrane. Cleavages take place as an ordered, step-wise cascade to yield mature proteins. This process is called maturation. Displays maximal activity during the budding process just prior to particle release from the cell. Its function is as follows. Enhances the activity of the reverse transcriptase. May be part of the mature RT. Functionally, RT is a multifunctional enzyme that converts the viral dimeric RNA genome into dsDNA in the cytoplasm, shortly after virus entry into the cell. This enzyme displays a DNA polymerase activity that can copy either DNA or RNA templates, and a ribonuclease H (RNase H) activity that cleaves the RNA strand of RNA-DNA heteroduplexes in a partially processive 3' to 5' endonucleasic mode. Conversion of viral genomic RNA into dsDNA requires many steps. A tRNA binds to the primer-binding site (PBS) situated at the 5' end of the viral RNA. RT uses the 3' end of the tRNA primer to perfom a short round of RNA-dependent minus-strand DNA synthesis. The reading proceeds through the U5 region and ends after the repeated (R) region which is present at both ends of viral RNA. The portion of the RNA-DNA heteroduplex is digested by the RNase H, resulting in a ssDNA product attached to the tRNA primer. This ssDNA/tRNA hybridizes with the identical R region situated at the 3' end of viral RNA. This template exchange, known as minus-strand DNA strong stop transfer, can be either intra- or intermolecular. RT uses the 3' end of this newly synthesized short ssDNA to perfom the RNA-dependent minus-strand DNA synthesis of the whole template. RNase H digests the RNA template except for a polypurine tract (PPT) situated at the 5' end of the genome. It is not clear if both polymerase and RNase H activities are simultaneous. RNase H probably can proceed both in a polymerase-dependent (RNA cut into small fragments by the same RT performing DNA synthesis) and a polymerase-independent mode (cleavage of remaining RNA fragments by free RTs). Secondly, RT performs DNA-directed plus-strand DNA synthesis using the PPT that has not been removed by RNase H as primers. PPT and tRNA primers are then removed by RNase H. The 3' and 5' ssDNA PBS regions hybridize to form a circular dsDNA intermediate. Strand displacement synthesis by RT to the PBS and PPT ends produces a blunt ended, linear dsDNA copy of the viral genome that includes long terminal repeats (LTRs) at both ends. In terms of biological role, catalyzes viral DNA integration into the host chromosome, by performing a series of DNA cutting and joining reactions. This Macaca mulatta (Rhesus macaque) protein is Gag-Pro-Pol polyprotein (gag-pro-pol).